The sequence spans 776 residues: Endonuclease MutS2 (776 aa).

Position 330–337 (330–337 (GPNTGGKT)) interacts with ATP. One can recognise a Smr domain in the interval 701-776 (LDLRGMRYEE…GSGATIAILK (76 aa)).

Belongs to the DNA mismatch repair MutS family. MutS2 subfamily. Homodimer. Binds to stalled ribosomes, contacting rRNA.

Endonuclease that is involved in the suppression of homologous recombination and thus may have a key role in the control of bacterial genetic diversity. Functionally, acts as a ribosome collision sensor, splitting the ribosome into its 2 subunits. Detects stalled/collided 70S ribosomes which it binds and splits by an ATP-hydrolysis driven conformational change. Acts upstream of the ribosome quality control system (RQC), a ribosome-associated complex that mediates the extraction of incompletely synthesized nascent chains from stalled ribosomes and their subsequent degradation. Probably generates substrates for RQC. The polypeptide is Endonuclease MutS2 (Lactococcus lactis subsp. lactis (strain IL1403) (Streptococcus lactis)).